The following is a 339-amino-acid chain: Centrosomal protein of 41 kDa (339 aa).

Residues arginine 56 to aspartate 99 are disordered. Residues serine 62 and serine 65 each carry the phosphoserine modification. The span at serine 62–alanine 73 shows a compositional bias: low complexity. Phosphothreonine is present on threonine 75. A phosphoserine mark is found at serine 80 and serine 87. A compositionally biased stretch (polar residues) spans glutamate 82–aspartate 99. The region spanning proline 135–valine 232 is the Rhodanese domain. The interval aspartate 283 to lysine 339 is disordered. Residues proline 286–alanine 299 show a composition bias toward polar residues. Arginine 309 carries the omega-N-methylarginine modification. Residues asparagine 313–histidine 332 are compositionally biased toward polar residues.

This sequence belongs to the CEP41 family. As to quaternary structure, found in a complex with TTLL6.

The protein localises to the cytoplasm. Its subcellular location is the cytoskeleton. The protein resides in the microtubule organizing center. It is found in the centrosome. It localises to the cell projection. The protein localises to the cilium. Its subcellular location is the cilium basal body. Functionally, required during ciliogenesis for tubulin glutamylation in cilium. Probably acts by participating in the transport of TTLL6, a tubulin polyglutamylase, between the basal body and the cilium. The polypeptide is Centrosomal protein of 41 kDa (Cep41) (Rattus norvegicus (Rat)).